Consider the following 304-residue polypeptide: Putative S-adenosyl-L-methionine-dependent methyltransferase MSMEG_1482/MSMEI_1446 (304 aa).

Residues D130 and 159 to 160 (DL) each bind S-adenosyl-L-methionine.

This sequence belongs to the UPF0677 family.

Functionally, exhibits S-adenosyl-L-methionine-dependent methyltransferase activity. The protein is Putative S-adenosyl-L-methionine-dependent methyltransferase MSMEG_1482/MSMEI_1446 of Mycolicibacterium smegmatis (strain ATCC 700084 / mc(2)155) (Mycobacterium smegmatis).